The following is a 157-amino-acid chain: Ribosome maturation factor RimP (157 aa).

Belongs to the RimP family.

The protein localises to the cytoplasm. Required for maturation of 30S ribosomal subunits. The protein is Ribosome maturation factor RimP of Enterococcus faecalis (strain ATCC 700802 / V583).